An 854-amino-acid chain; its full sequence is Probable inorganic carbon transporter subunit DabA (854 aa).

Zn(2+) is bound by residues Cys-378, Asp-380, His-560, and Cys-575.

This sequence belongs to the inorganic carbon transporter (TC 9.A.2) DabA family. Forms a complex with DabB. Zn(2+) is required as a cofactor.

It localises to the cell membrane. In terms of biological role, part of an energy-coupled inorganic carbon pump. The polypeptide is Probable inorganic carbon transporter subunit DabA (Bacillus cereus (strain ATCC 14579 / DSM 31 / CCUG 7414 / JCM 2152 / NBRC 15305 / NCIMB 9373 / NCTC 2599 / NRRL B-3711)).